The primary structure comprises 419 residues: Transcription termination factor Rho (419 aa).

A Rho RNA-BD domain is found at 48-123; that stretch reads DIFGDGVLEI…LKVNEVNYDK (76 aa). RNA-binding stretches follow at residues 61-66, 78-80, and 108-110; these read GFGFLR, DIY, and ERY. Residues 169 to 174, 181 to 186, and Arg-212 contribute to the ATP site; these read GRGQRG and KAGKTM. The RNA-binding 2 stretch occupies residues 284 to 288; the sequence is VLTGG.

This sequence belongs to the Rho family. As to quaternary structure, homohexamer. The homohexamer assembles into an open ring structure.

Its function is as follows. Facilitates transcription termination by a mechanism that involves Rho binding to the nascent RNA, activation of Rho's RNA-dependent ATPase activity, and release of the mRNA from the DNA template. The sequence is that of Transcription termination factor Rho from Salmonella typhi.